The following is a 352-amino-acid chain: Histidinol-phosphate aminotransferase (352 aa).

An N6-(pyridoxal phosphate)lysine modification is found at Lys210.

The protein belongs to the class-II pyridoxal-phosphate-dependent aminotransferase family. Histidinol-phosphate aminotransferase subfamily. As to quaternary structure, homodimer. Pyridoxal 5'-phosphate serves as cofactor.

The catalysed reaction is L-histidinol phosphate + 2-oxoglutarate = 3-(imidazol-4-yl)-2-oxopropyl phosphate + L-glutamate. The protein operates within amino-acid biosynthesis; L-histidine biosynthesis; L-histidine from 5-phospho-alpha-D-ribose 1-diphosphate: step 7/9. The polypeptide is Histidinol-phosphate aminotransferase (Clostridium acetobutylicum (strain ATCC 824 / DSM 792 / JCM 1419 / IAM 19013 / LMG 5710 / NBRC 13948 / NRRL B-527 / VKM B-1787 / 2291 / W)).